The following is a 709-amino-acid chain: Phosphoprotein (709 aa).

The tract at residues 1 to 35 (MDKLELVNDGLNIIDFIQKNQKEIQKTYGRSSIQQ) is N0 binding. The segment at 53 to 92 (SGESEQVEGGMSKDDGDVERRNLEDLSSTSPTDGTIGKRV) is disordered. Residues 63–76 (MSKDDGDVERRNLE) show a composition bias toward basic and acidic residues. Residues 110 to 140 (VVTDVVYHDHGGECTGYGFTSSPERGWSDYT) form an interaction with host STAT1 region. A Phosphoserine; by host modification is found at Ser257. The disordered stretch occupies residues 265–324 (ISPEDEEPSSVGGKPNESIGRTIEGQSIRDNLQAKDNKSTDVPGAGPKDSAVKEEPPQKR). The residue at position 350 (Ser350) is a Phosphoserine; by host. The disordered stretch occupies residues 384–473 (VQTADRQRPG…VNPVDDNDSL (90 aa)). Composition is skewed to polar residues over residues 416-426 (GTENVPGSKSG) and 444-456 (NAEN…STAV). Positions 475 to 580 (DKYIMPSDDF…LVSMMIMIPG (106 aa)) are multimerization.

Homotetramer. Interacts (via multimerization domain) with polymerase L; this interaction forms the polymerase L-P complex. Interacts (via N-terminus) with N0 (via Ncore); this interaction allows P to chaperon N0 to avoid N polymerization before encapsidation. Interacts (via C-terminus) with N-RNA template (via C-terminus); this interaction positions the polymerase on the template for both transcription and replication. Interacts with host STAT1.

The protein resides in the virion. It localises to the host cytoplasm. Its function is as follows. Essential cofactor of the RNA polymerase L that plays a central role in the transcription and replication by forming the polymerase complex with RNA polymerase L and recruiting L to the genomic N-RNA template for RNA synthesis. Also plays a central role in the encapsidation of nascent RNA chains by forming the encapsidation complex with the nucleocapsid protein N (N-P complex). Acts as a chaperone for newly synthesized free N protein, so-called N0, allowing encapsidation of nascent RNA chains during replication. The nucleoprotein protein N prevents excessive phosphorylation of P, which leads to down-regulation of viral transcription/ replication. Participates, together with N, in the formation of viral factories (viroplasms), which are large inclusions in the host cytoplasm where replication takes place. The chain is Phosphoprotein (P/V/C) from Nipah virus.